The sequence spans 858 residues: Ubiquitin carboxyl-terminal hydrolase 5 (858 aa).

Ala-2 carries the post-translational modification N-acetylalanine. Residues 74-96 (RRTRRPKEEDPATGTGDPPRKKP) form a disordered region. Residue Lys-113 forms a Glycyl lysine isopeptide (Lys-Gly) (interchain with G-Cter in SUMO) linkage. A phosphoserine mark is found at Ser-149 and Ser-156. The segment at 175 to 283 (QVSKHAFSLK…EHLSHFGIDM (109 aa)) adopts a UBP-type; degenerate zinc-finger fold. Cys-195 and Cys-816 are joined by a disulfide. Zn(2+) is bound by residues Cys-199 and Cys-202. Trp-209 serves as a coordination point for substrate. Position 219 (Cys-219) interacts with Zn(2+). 221–224 (RRYF) contacts substrate. His-232 is a Zn(2+) binding site. The substrate site is built by Tyr-259, Tyr-261, and Asp-264. Thr-292 is modified (phosphothreonine). Residues 326-856 (TGIRNLGNSC…LGYIYFYQRV (531 aa)) enclose the USP domain. Cys-335 (nucleophile) is an active-site residue. Thr-623 carries the post-translational modification Phosphothreonine. UBA domains follow at residues 654-695 (MLDE…VMSH) and 722-762 (PPPE…IFSH). Phosphoserine is present on residues Ser-779, Ser-783, and Ser-785. Residue His-818 is the Proton acceptor of the active site.

Belongs to the peptidase C19 family. In terms of assembly, homodimer. Interacts with TRIML1. Ubiquitinated by SMURF1; leading to proteasomal degradation. Post-translationally, SUMOylated at Lys-113; SUMOylation affects the interaction with Cav3.2 channels.

The protein localises to the cytoplasm. It localises to the stress granule. Its subcellular location is the nucleus. It catalyses the reaction Thiol-dependent hydrolysis of ester, thioester, amide, peptide and isopeptide bonds formed by the C-terminal Gly of ubiquitin (a 76-residue protein attached to proteins as an intracellular targeting signal).. In terms of biological role, deubiquitinating enzyme that participates in a wide range of cellular processes by specifically cleaving isopeptide bonds between ubiquitin and substrate proteins or ubiquitin itself. Affects thereby important cellular signaling pathways such as NF-kappa-B, Wnt/beta-catenin, and cytokine production by regulating ubiquitin-dependent protein degradation. Participates in the activation of the Wnt signaling pathway by promoting FOXM1 deubiquitination and stabilization that induces the recruitment of beta-catenin to Wnt target gene promoter. Regulates the assembly and disassembly of heat-induced stress granules by mediating the hydrolysis of unanchored ubiquitin chains. Promotes lipopolysaccharide-induced apoptosis and inflammatory response by stabilizing the TXNIP protein. Affects T-cell biology by stabilizing the inhibitory receptor on T-cells PDC1. Acts as a negative regulator of autophagy by regulating ULK1 at both protein and mRNA levels. Acts also as a negative regulator of type I interferon production by simultaneously removing both 'Lys-48'-linked unanchored and 'Lys-63'-linked anchored polyubiquitin chains on the transcription factor IRF3. Modulates the stability of DNA mismatch repair protein MLH1 and counteracts the effect of the ubiquitin ligase UBR4. Upon activation by insulin, it gets phosphorylated through mTORC1-mediated phosphorylation to enhance YTHDF1 stability by removing 'Lys-11'-linked polyubiquitination. May also deubiquitinate other substrates such as the calcium channel CACNA1H. The protein is Ubiquitin carboxyl-terminal hydrolase 5 (USP5) of Homo sapiens (Human).